A 214-amino-acid chain; its full sequence is Insulin-like growth factor 2 (214 aa).

The b stretch occupies residues 48–79 (EVASAETLCGGELVDALQFVCEDRGFYFSRPT). Cystine bridges form between Cys-56/Cys-97, Cys-68/Cys-110, and Cys-96/Cys-101. The segment at 80 to 90 (SRSNSRRSQNR) is c. The tract at residues 91-111 (GIVEECCFRSCDLNLLEQYCA) is a. The d stretch occupies residues 112 to 117 (KPAKSE). Residues 118–214 (RDVSATSLQI…PPTDNYVSHN (97 aa)) constitute a propeptide, e peptide.

This sequence belongs to the insulin family.

It localises to the secreted. The insulin-like growth factors, isolated from plasma, are structurally and functionally related to insulin but have a much higher growth-promoting activity. Acts as a ligand for integrin which is required for IGF2 signaling. The polypeptide is Insulin-like growth factor 2 (Oncorhynchus mykiss (Rainbow trout)).